A 184-amino-acid chain; its full sequence is Cathelicidin-related peptide Pt_CRAMP1 (184 aa).

The signal sequence occupies residues 1-22; sequence MEGFFWKTWLVVAAFAIGGTSS. Positions 23–150 are excised as a propeptide; that stretch reads LPHKPLTYEE…EDEKDQPRRV (128 aa). Intrachain disulfides connect Cys-81-Cys-92 and Cys-103-Cys-120. The span at 125–144 shows a compositional bias: acidic residues; it reads EDEEQNQEEEEEEEKEEDEK. Positions 125-147 are disordered; sequence EDEEQNQEEEEEEEKEEDEKDQP.

Belongs to the cathelicidin family. As to expression, expressed by the venom gland.

It localises to the secreted. It is found in the target cell membrane. Functionally, potent antimicrobial peptide against Gram-negative (MIC=2 ug/ml against E.coli ATCC 25922, MIC=8 ug/ml against P.aeruginosa) and Gram-positive bacteria (MIC=32 ug/ml against E.faecalis, MIC=32 ug/ml against S.aureus). Adopts an amphipathic alpha helical conformation, that may allow to partition into the target membrane. High hemolytic activities have been observed on mammalian cells. In Pseudonaja textilis (Eastern brown snake), this protein is Cathelicidin-related peptide Pt_CRAMP1.